The sequence spans 537 residues: CTP synthase (537 aa).

Residues 1-267 (MTKYIFVTGG…DQIVLDHFDV (267 aa)) are amidoligase domain. Ser-13 contributes to the CTP binding site. Ser-13 is a UTP binding site. 14 to 19 (SIGKGI) serves as a coordination point for ATP. Tyr-54 is an L-glutamine binding site. ATP is bound at residue Asp-71. Positions 71 and 141 each coordinate Mg(2+). CTP contacts are provided by residues 148–150 (DIE), 188–193 (KTKPTQ), and Lys-224. UTP contacts are provided by residues 188–193 (KTKPTQ) and Lys-224. Residues 292-535 (KIALVGKYVA…IDAANQTGKV (244 aa)) form the Glutamine amidotransferase type-1 domain. Gly-354 lines the L-glutamine pocket. The active-site Nucleophile; for glutamine hydrolysis is the Cys-381. L-glutamine-binding positions include 382 to 385 (LGMQ), Glu-405, and Arg-463. Catalysis depends on residues His-508 and Glu-510.

Belongs to the CTP synthase family. In terms of assembly, homotetramer.

The enzyme catalyses UTP + L-glutamine + ATP + H2O = CTP + L-glutamate + ADP + phosphate + 2 H(+). It catalyses the reaction L-glutamine + H2O = L-glutamate + NH4(+). It carries out the reaction UTP + NH4(+) + ATP = CTP + ADP + phosphate + 2 H(+). Its pathway is pyrimidine metabolism; CTP biosynthesis via de novo pathway; CTP from UDP: step 2/2. Allosterically activated by GTP, when glutamine is the substrate; GTP has no effect on the reaction when ammonia is the substrate. The allosteric effector GTP functions by stabilizing the protein conformation that binds the tetrahedral intermediate(s) formed during glutamine hydrolysis. Inhibited by the product CTP, via allosteric rather than competitive inhibition. Catalyzes the ATP-dependent amination of UTP to CTP with either L-glutamine or ammonia as the source of nitrogen. Regulates intracellular CTP levels through interactions with the four ribonucleotide triphosphates. This is CTP synthase from Lactiplantibacillus plantarum (strain ATCC BAA-793 / NCIMB 8826 / WCFS1) (Lactobacillus plantarum).